The chain runs to 150 residues: Cytochrome c oxidase subunit 5A, mitochondrial (150 aa).

The transit peptide at 1-41 (MLGTALRRCAVAAASRAGPRGLQHPAPVPGPTAAIQSIRCY) directs the protein to the mitochondrion. An SIFI-degron motif is present at residues 2 to 17 (LGTALRRCAVAAASRA). N6-acetyllysine is present on residues lysine 87 and lysine 113. Threonine 141 is modified (phosphothreonine).

The protein belongs to the cytochrome c oxidase subunit 5A family. Component of the cytochrome c oxidase (complex IV, CIV), a multisubunit enzyme composed of 14 subunits. The complex is composed of a catalytic core of 3 subunits MT-CO1, MT-CO2 and MT-CO3, encoded in the mitochondrial DNA, and 11 supernumerary subunits COX4I, COX5A, COX5B, COX6A, COX6B, COX6C, COX7A, COX7B, COX7C, COX8 and NDUFA4, which are encoded in the nuclear genome. The complex exists as a monomer or a dimer and forms supercomplexes (SCs) in the inner mitochondrial membrane with NADH-ubiquinone oxidoreductase (complex I, CI) and ubiquinol-cytochrome c oxidoreductase (cytochrome b-c1 complex, complex III, CIII), resulting in different assemblies (supercomplex SCI(1)III(2)IV(1) and megacomplex MCI(2)III(2)IV(2)). Interacts with AFG1L. Interacts with RAB5IF. In response to mitochondrial stress, the precursor protein is ubiquitinated by the SIFI complex in the cytoplasm before mitochondrial import, leading to its degradation. Within the SIFI complex, UBR4 initiates ubiquitin chain that are further elongated or branched by KCMF1.

The protein localises to the mitochondrion inner membrane. It participates in energy metabolism; oxidative phosphorylation. Component of the cytochrome c oxidase, the last enzyme in the mitochondrial electron transport chain which drives oxidative phosphorylation. The respiratory chain contains 3 multisubunit complexes succinate dehydrogenase (complex II, CII), ubiquinol-cytochrome c oxidoreductase (cytochrome b-c1 complex, complex III, CIII) and cytochrome c oxidase (complex IV, CIV), that cooperate to transfer electrons derived from NADH and succinate to molecular oxygen, creating an electrochemical gradient over the inner membrane that drives transmembrane transport and the ATP synthase. Cytochrome c oxidase is the component of the respiratory chain that catalyzes the reduction of oxygen to water. Electrons originating from reduced cytochrome c in the intermembrane space (IMS) are transferred via the dinuclear copper A center (CU(A)) of subunit 2 and heme A of subunit 1 to the active site in subunit 1, a binuclear center (BNC) formed by heme A3 and copper B (CU(B)). The BNC reduces molecular oxygen to 2 water molecules using 4 electrons from cytochrome c in the IMS and 4 protons from the mitochondrial matrix. This Nycticebus coucang (Slow loris) protein is Cytochrome c oxidase subunit 5A, mitochondrial (COX5A).